The sequence spans 229 residues: Deoxyribose-phosphate aldolase (229 aa).

Catalysis depends on D96, which acts as the Proton donor/acceptor. K166 functions as the Schiff-base intermediate with acetaldehyde in the catalytic mechanism. The Proton donor/acceptor role is filled by K195.

Belongs to the DeoC/FbaB aldolase family. DeoC type 1 subfamily.

The protein resides in the cytoplasm. The enzyme catalyses 2-deoxy-D-ribose 5-phosphate = D-glyceraldehyde 3-phosphate + acetaldehyde. It functions in the pathway carbohydrate degradation; 2-deoxy-D-ribose 1-phosphate degradation; D-glyceraldehyde 3-phosphate and acetaldehyde from 2-deoxy-alpha-D-ribose 1-phosphate: step 2/2. Functionally, catalyzes a reversible aldol reaction between acetaldehyde and D-glyceraldehyde 3-phosphate to generate 2-deoxy-D-ribose 5-phosphate. The chain is Deoxyribose-phosphate aldolase from Micrococcus luteus (strain ATCC 4698 / DSM 20030 / JCM 1464 / CCM 169 / CCUG 5858 / IAM 1056 / NBRC 3333 / NCIMB 9278 / NCTC 2665 / VKM Ac-2230) (Micrococcus lysodeikticus).